Consider the following 181-residue polypeptide: Adenine phosphoribosyltransferase (181 aa).

The protein belongs to the purine/pyrimidine phosphoribosyltransferase family. In terms of assembly, homodimer.

Its subcellular location is the cytoplasm. The enzyme catalyses AMP + diphosphate = 5-phospho-alpha-D-ribose 1-diphosphate + adenine. It participates in purine metabolism; AMP biosynthesis via salvage pathway; AMP from adenine: step 1/1. In terms of biological role, catalyzes a salvage reaction resulting in the formation of AMP, that is energically less costly than de novo synthesis. This chain is Adenine phosphoribosyltransferase, found in Shewanella amazonensis (strain ATCC BAA-1098 / SB2B).